A 1091-amino-acid chain; its full sequence is AP-3 complex subunit beta-1 (1091 aa).

Disordered stretches follow at residues 1-32 (MSGN…SPSG) and 267-290 (EDNE…KKKP). The span at 267-288 (EDNEKNFYESDDEQKEKTDQKK) shows a compositional bias: basic and acidic residues. A phosphoserine mark is found at S276 and S609. Residues 664 to 807 (AGKAKKENPA…EKEKKTKEDR (144 aa)) form a disordered region. A compositionally biased stretch (basic and acidic residues) spans 667–678 (AKKENPARKFYS). 2 stretches are compositionally biased toward acidic residues: residues 679 to 695 (DSEE…DSES) and 703 to 718 (EQDE…SEDS). Basic and acidic residues predominate over residues 719–736 (SSEHRSDSESVSEVGDKR). A phosphoserine mark is found at S748 and S750. Low complexity predominate over residues 763–775 (SDSSSTDSSSVEE). Over residues 776 to 789 (SSSDSESESESESE) the composition is skewed to acidic residues. A compositionally biased stretch (basic and acidic residues) spans 790–807 (SESKKVTMEKEKKTKEDR).

Belongs to the adaptor complexes large subunit family. In terms of assembly, adaptor protein complex 3 (AP-3) is a heterotetramer composed of two large adaptins (delta-type subunit AP3D1 and beta-type subunit AP3B1 or AP3B2), a medium adaptin (mu-type subunit AP3M1 or AP3M2) and a small adaptin (sigma-type subunit APS1 or AP3S2). AP-3 associates with the BLOC-1 complex. Interacts with KIF3A; interaction is direct; interaction is impaired by pyrophosphorylation of AP3B1. Phosphorylated on serine residues. Post-translationally, pyrophosphorylation by 5-diphosphoinositol pentakisphosphate (5-IP7) impairs interaction with KIF3A. Serine pyrophosphorylation is achieved by Mg(2+)-dependent, but enzyme independent transfer of a beta-phosphate from a inositol pyrophosphate to a pre-phosphorylated serine residue.

The protein localises to the cytoplasmic vesicle. The protein resides in the clathrin-coated vesicle membrane. It localises to the golgi apparatus. Functionally, subunit of non-clathrin- and clathrin-associated adaptor protein complex 3 (AP-3) that plays a role in protein sorting in the late-Golgi/trans-Golgi network (TGN) and/or endosomes. The AP complexes mediate both the recruitment of clathrin to membranes and the recognition of sorting signals within the cytosolic tails of transmembrane cargo molecules. AP-3 appears to be involved in the sorting of a subset of transmembrane proteins targeted to lysosomes and lysosome-related organelles. In concert with the BLOC-1 complex, AP-3 is required to target cargos into vesicles assembled at cell bodies for delivery into neurites and nerve terminals. The polypeptide is AP-3 complex subunit beta-1 (AP3B1) (Canis lupus familiaris (Dog)).